The chain runs to 126 residues: C-type natriuretic peptide (126 aa).

An N-terminal signal peptide occupies residues 1–23 (MHLSQLLACALLLALLSLRPSEA). The tract at residues 20 to 71 (PSEAKPGAPPKVPRTPSGEEVAEPQAAGGGQKKGDKTPGGGGANLKDDRSRL) is disordered. Residues 24 to 73 (KPGAPPKVPRTPSGEEVAEPQAAGGGQKKGDKTPGGGGANLKDDRSRLLR) constitute a propeptide that is removed on maturation. Residues 46–62 (AGGGQKKGDKTPGGGGA) are compositionally biased toward gly residues. A disulfide bridge connects residues Cys110 and Cys126.

This sequence belongs to the natriuretic peptide family. Post-translationally, degraded by IDE (in vitro).

Its subcellular location is the secreted. Functionally, hormone which plays a role in endochondral ossification through regulation of cartilaginous growth plate chondrocytes proliferation and differentiation. May also be vasoactive and natriuretic. Acts by specifically binding and stimulating NPR2 to produce cGMP. Binds the clearance receptor NPR3. The chain is C-type natriuretic peptide (NPPC) from Bos taurus (Bovine).